Consider the following 625-residue polypeptide: MAIDGEKKKDPRAWDALTPSLAEWILDAIKSMGFEKMTPVQASTIPLFMGNKDVVVEAVTGSGKTLSFLIPVVEKLLRLEEPIKKHHVGAIIVSPTRELATQIHSVLTSLLAFHEPSAGALKPLEEGEKRKPSSTLRVVSQLLLGGTTTPAQDLSRFLKNSPNLLISTPGRLLELLSSPHVHCPQSSFEVLVLDEADRLLDLGFKDDLQKILSRLPKQRRTGLFSASVSEAVGEIVRVGLRNPVKIAVKVKGAGGDKMTPASLQMSYLLTPPTHKFPALLSLLSQLQPTPQKSIIYLSTCAAVDYFQPLLEAVLPKQFALVSLHGKHPPNVRQRNFSKYVAAVSPTILLTTDVAARGLDIPQVDLVVQIDPPSDPKVFLHRCGRAGRAGRKGLSVIFLQPGREEDYIPFLEIRKTPITLFKRPEISTTDDAAKILISKMRKEVLADRALYDKGQRAFVSWVQAYSKHQASSIFRVADLDWTDLGNAWALVRLPKMPELKKWEGDKTLGIKLDMSEYAYKDKVREKARRVAMEEAKNAGPYVPTEEQIARKKQREAWSQKHEKQDLKELKREKKKRKREIERLDKMTDEEKRVEQEKERELQALIEQVKRRKIEDDADEEFEGFAD.

The short motif at 14–42 (WDALTPSLAEWILDAIKSMGFEKMTPVQA) is the Q motif element. The Helicase ATP-binding domain maps to 45 to 246 (IPLFMGNKDV…RVGLRNPVKI (202 aa)). 58 to 65 (AVTGSGKT) is a binding site for ATP. The DEAD box signature appears at 194-197 (DEAD). The Helicase C-terminal domain maps to 278 to 436 (ALLSLLSQLQ…TTDDAAKILI (159 aa)). Residues 550-597 (KKQREAWSQKHEKQDLKELKREKKKRKREIERLDKMTDEEKRVEQEKE) are disordered. Basic and acidic residues-rich tracts occupy residues 553-570 (REAWSQKHEKQDLKELKR) and 577-597 (REIERLDKMTDEEKRVEQEKE). Positions 557–614 (SQKHEKQDLKELKREKKKRKREIERLDKMTDEEKRVEQEKERELQALIEQVKRRKIED) form a coiled coil.

The protein belongs to the DEAD box helicase family. DDX55/SPB4 subfamily. In terms of assembly, component of pre-60S ribosomal complexes.

The protein resides in the nucleus. The protein localises to the nucleolus. It carries out the reaction ATP + H2O = ADP + phosphate + H(+). Its function is as follows. ATP-binding RNA helicase involved in the biogenesis of 60S ribosomal subunits. Binds 90S pre-ribosomal particles and dissociates from pre-60S ribosomal particles after processing of 27SB pre-rRNA. Required for the normal formation of 18S rRNA through the processing of pre-rRNAs at sites A0, A1 and A2, and the normal formation of 25S and 5.8S rRNAs through the processing of pre-rRNAs at sites C1 and C2. In Sclerotinia sclerotiorum (strain ATCC 18683 / 1980 / Ss-1) (White mold), this protein is ATP-dependent rRNA helicase spb4.